The primary structure comprises 511 residues: Mannosyl-oligosaccharide alpha-1,2-mannosidase (511 aa).

Residues 1–35 form the signal peptide; that stretch reads MRLPVSFPLTVLSLLGSTIAHPYGETEAVLRSEPK. Residue Asn-182 is glycosylated (N-linked (GlcNAc...) asparagine). Cys-332 and Cys-361 are disulfide-bonded. N-linked (GlcNAc...) asparagine glycosylation occurs at Asn-366. The Proton donor role is filled by Asp-375. Asn-438 carries an N-linked (GlcNAc...) asparagine glycan. Thr-501 lines the Ca(2+) pocket.

It belongs to the glycosyl hydrolase 47 family. In terms of assembly, homodimer. Ca(2+) is required as a cofactor.

Its subcellular location is the secreted. The catalysed reaction is N(4)-(alpha-D-Man-(1-&gt;2)-alpha-D-Man-(1-&gt;2)-alpha-D-Man-(1-&gt;3)-[alpha-D-Man-(1-&gt;2)-alpha-D-Man-(1-&gt;3)-[alpha-D-Man-(1-&gt;2)-alpha-D-Man-(1-&gt;6)]-alpha-D-Man-(1-&gt;6)]-beta-D-Man-(1-&gt;4)-beta-D-GlcNAc-(1-&gt;4)-beta-D-GlcNAc)-L-asparaginyl-[protein] (N-glucan mannose isomer 9A1,2,3B1,2,3) + 4 H2O = N(4)-(alpha-D-Man-(1-&gt;3)-[alpha-D-Man-(1-&gt;3)-[alpha-D-Man-(1-&gt;6)]-alpha-D-Man-(1-&gt;6)]-beta-D-Man-(1-&gt;4)-beta-D-GlcNAc-(1-&gt;4)-beta-D-GlcNAc)-L-asparaginyl-[protein] (N-glucan mannose isomer 5A1,2) + 4 beta-D-mannose. It catalyses the reaction N(4)-(alpha-D-Man-(1-&gt;2)-alpha-D-Man-(1-&gt;2)-alpha-D-Man-(1-&gt;3)-[alpha-D-Man-(1-&gt;3)-[alpha-D-Man-(1-&gt;2)-alpha-D-Man-(1-&gt;6)]-alpha-D-Man-(1-&gt;6)]-beta-D-Man-(1-&gt;4)-beta-D-GlcNAc-(1-&gt;4)-beta-D-GlcNAc)-L-asparaginyl-[protein] (N-glucan mannose isomer 8A1,2,3B1,3) + 3 H2O = N(4)-(alpha-D-Man-(1-&gt;3)-[alpha-D-Man-(1-&gt;3)-[alpha-D-Man-(1-&gt;6)]-alpha-D-Man-(1-&gt;6)]-beta-D-Man-(1-&gt;4)-beta-D-GlcNAc-(1-&gt;4)-beta-D-GlcNAc)-L-asparaginyl-[protein] (N-glucan mannose isomer 5A1,2) + 3 beta-D-mannose. Its pathway is protein modification; protein glycosylation. Involved in the maturation of Asn-linked oligosaccharides. Progressively trim alpha-1,2-linked mannose residues from Man(9)GlcNAc(2) to produce Man(5)GlcNAc(2). The chain is Mannosyl-oligosaccharide alpha-1,2-mannosidase (MSDC) from Penicillium citrinum.